Consider the following 706-residue polypeptide: Complement C1r-B subcomponent (706 aa).

A signal peptide spans 1-16 (MWLFALLVTLFYGVEG). One can recognise a CUB 1 domain in the interval 17–140 (SIYLPQKLYG…KGFLAYYQAV (124 aa)). Ca(2+) contacts are provided by glutamate 65, aspartate 73, and aspartate 118. Cysteine 70 and cysteine 88 are joined by a disulfide. Residue asparagine 124 is glycosylated (N-linked (GlcNAc...) asparagine). Ca(2+) is bound by residues aspartate 141, leucine 142, and glutamate 144. Residues 141 to 189 (DLDECASQPNSVEEGLQPRCQHLCHNYVGGYFCSCHPGYELQKDGQSCQ) enclose the EGF-like; calcium-binding domain. 4 cysteine pairs are disulfide-bonded: cysteine 145-cysteine 164, cysteine 160-cysteine 173, cysteine 175-cysteine 188, and cysteine 192-cysteine 219. Ca(2+) contacts are provided by asparagine 166, tyrosine 167, and glycine 170. Position 166 is a (3R)-3-hydroxyasparagine (asparagine 166). The 113-residue stretch at 192 to 304 (CSSELYTEPS…RGWKLHYTTE (113 aa)) folds into the CUB 2 domain. Serine 205 is subject to Phosphoserine; by CK2. The N-linked (GlcNAc...) asparagine glycan is linked to asparagine 220. Ca(2+) is bound by residues aspartate 242, aspartate 252, aspartate 289, and aspartate 293. Cysteine 249 and cysteine 267 form a disulfide bridge. Sushi domains follow at residues 306-372 (IKCP…RCKI) and 373-448 (KNCG…RCLP). Intrachain disulfides connect cysteine 308/cysteine 357, cysteine 337/cysteine 370, cysteine 375/cysteine 428, cysteine 405/cysteine 446, and cysteine 450/cysteine 578. The 241-residue stretch at 463-703 (IIGGQPARPG…YVDWIKKEMG (241 aa)) folds into the Peptidase S1 domain. Residues histidine 501 and aspartate 558 each act as charge relay system in the active site. Residue asparagine 582 is glycosylated (N-linked (GlcNAc...) asparagine). Cystine bridges form between cysteine 621-cysteine 640 and cysteine 651-cysteine 681. Serine 655 acts as the Charge relay system in catalysis.

This sequence belongs to the peptidase S1 family. In terms of assembly, core component of the complement C1 complex, a calcium-dependent complex composed of 1 molecule of the C1Q subcomplex, 2 molecules of C1R and 2 molecules of C1S. The C1Q subcomplex is composed 18 subunits: 3 chains of C1QA, C1QB, and C1QC trimerize to form 6 collagen-like triple helices connected to six globular ligand-recognition modules. Within the C1 complex, C1R is a dimer of identical chains, each of which is activated by cleavage into two chains, heavy and light, connected by disulfide bonds. In terms of processing, cleaved and activated by autocatalytic processing to generate Complement C1r subcomponent heavy and light chains that are connected by disulfide bonds. The iron and 2-oxoglutarate dependent 3-hydroxylation of aspartate and asparagine is (R) stereospecific within EGF domains.

Its subcellular location is the secreted. It localises to the cell surface. It carries out the reaction Selective cleavage of Lys(or Arg)-|-Ile bond in complement subcomponent C1s to form the active form of C1s (EC 3.4.21.42).. Activated by the C1Q subcomplex of the C1 complex following C1Q binding to immunoglobulins (IgG or IgM) complexed with antigens to form antigen-antibody complexes on the surface of pathogens. Immunoglobulin-binding promotes autoactivation of C1R, which results in the cleavage of the Arg-Ile bond in the catalytic domain. Serine protease component of the complement C1 complex, a multiprotein complex that initiates the classical pathway of the complement system, a cascade of proteins that leads to phagocytosis and breakdown of pathogens and signaling that strengthens the adaptive immune system. C1R catalyzes the first enzymatic step in the classical complement pathway: it is activated by the C1Q subcomplex of the C1 complex, which associates with IgG or IgM immunoglobulins complexed with antigens to form antigen-antibody complexes on the surface of pathogens. Immunoglobulin-binding promotes the autocatalytic cleavage and activation of C1R. Activated C1R then cleaves and activates C1S, the second protease of the classical complement pathway. It is unclear if C1R activates C1S within single, strained C1 complexes or between neighboring C1 complexes on surfaces. The chain is Complement C1r-B subcomponent (C1rb) from Mus musculus (Mouse).